Consider the following 109-residue polypeptide: Class I hydrophobin 18 (109 aa).

Positions 1-20 are cleaved as a signal peptide; the sequence is MFTEQVLNVIILLQTATVTA. Cystine bridges form between Cys-28/Cys-88, Cys-35/Cys-82, Cys-36/Cys-69, and Cys-89/Cys-102. 2 N-linked (GlcNAc...) asparagine glycosylation sites follow: Asn-91 and Asn-106.

This sequence belongs to the fungal hydrophobin family. As to quaternary structure, self-assembles to form functional amyloid fibrils called rodlets. Self-assembly into fibrillar rodlets occurs spontaneously at hydrophobic:hydrophilic interfaces and the rodlets further associate laterally to form amphipathic monolayers.

It is found in the secreted. It localises to the cell wall. In terms of biological role, aerial growth, conidiation, and dispersal of filamentous fungi in the environment rely upon a capability of their secreting small amphipathic proteins called hydrophobins (HPBs) with low sequence identity. Class I can self-assemble into an outermost layer of rodlet bundles on aerial cell surfaces, conferring cellular hydrophobicity that supports fungal growth, development and dispersal; whereas Class II form highly ordered films at water-air interfaces through intermolecular interactions but contribute nothing to the rodlet structure. The polypeptide is Class I hydrophobin 18 (Pleurotus ostreatus (strain PC15) (Oyster mushroom)).